Consider the following 123-residue polypeptide: Small ribosomal subunit protein uS12 (123 aa).

D89 carries the post-translational modification 3-methylthioaspartic acid.

This sequence belongs to the universal ribosomal protein uS12 family. In terms of assembly, part of the 30S ribosomal subunit. Contacts proteins S8 and S17. May interact with IF1 in the 30S initiation complex.

In terms of biological role, with S4 and S5 plays an important role in translational accuracy. Interacts with and stabilizes bases of the 16S rRNA that are involved in tRNA selection in the A site and with the mRNA backbone. Located at the interface of the 30S and 50S subunits, it traverses the body of the 30S subunit contacting proteins on the other side and probably holding the rRNA structure together. The combined cluster of proteins S8, S12 and S17 appears to hold together the shoulder and platform of the 30S subunit. This is Small ribosomal subunit protein uS12 from Rhizobium meliloti (strain 1021) (Ensifer meliloti).